A 203-amino-acid polypeptide reads, in one-letter code: Potassium channel Cha6605_3372 (203 aa).

At 1–7 the chain is on the cytoplasmic side; sequence MVEAPEQ. The helical transmembrane segment at 8–31 threads the bilayer; that stretch reads SETGRIEAFSDGVFAIAITLLVLE. Positions 12-18 match the RxxxFSD motif motif; sequence RIEAFSD. Residues 32–52 lie on the Extracellular side of the membrane; the sequence is IKVPQHKIVETVGLVSSLLSL. Residues 37–42 form a short helix H1 region; the sequence is HKIVET. The interval 44–50 is short helix H2; sequence GLVSSLL. Residues 53-78 form a helical membrane-spanning segment; the sequence is WPSYLAFLTSFASILVMWVNHHRIFS. The Cytoplasmic portion of the chain corresponds to 79-84; it reads LVARTD. Residues 85-110 traverse the membrane as a helical segment; the sequence is HAFFYWNGLLLMLVTFVPFPTALLAE. Residues 111 to 117 lie on the Extracellular side of the membrane; sequence YLIHPQA. Residues 118–142 traverse the membrane as a helical segment; the sequence is RVAASVYAGIFLAIAIVFNRLWKHA. At 143–154 the chain is on the cytoplasmic side; sequence ATADRLLAQKAD. Residues 155 to 181 form a helical membrane-spanning segment; it reads RHEVDAITKQYRFGPGLYLVAFALSFI. The Extracellular segment spans residues 182-183; sequence SV. The chain crosses the membrane as a helical span at residues 184 to 199; sequence WLSVGVCFVLAIYFAL. The Cytoplasmic portion of the chain corresponds to 200–203; it reads RSNA.

It belongs to the TMEM175 family. As to quaternary structure, homotetramer.

It is found in the membrane. The enzyme catalyses K(+)(in) = K(+)(out). Functionally, potassium channel. The channel is permeable for K(+), Rb(+) and Cs(+), while it is unable to conduct Na(+). The protein is Potassium channel Cha6605_3372 of Chamaesiphon minutus (strain ATCC 27169 / PCC 6605).